Reading from the N-terminus, the 1348-residue chain is Putative late blight resistance protein homolog R1B-12 (1348 aa).

2 coiled-coil regions span residues 446–469 and 561–583; these read RYSD…ESLQ and PRMN…KLLN. Positions 552–848 constitute an NB-ARC domain; sequence RTSSQLTRTP…ISESFIKSCE (297 aa). ATP is bound at residue 595-602; it reads GMPGLGKT. LRR repeat units lie at residues 977-1001, 1051-1074, 1123-1147, 1151-1170, 1171-1194, 1197-1219, 1220-1244, and 1309-1332; these read FKFL…LLYL, LRHL…SAKL, PITL…ISAQ, YLKL…TADH, LKHL…EVSN, FPQL…ADDA, FPNL…FMDI, and LPGI…DMDA. The 65-residue stretch at 1284–1348 folds into the HMA domain; it reads VKKMVLKFDT…VGKLINRGML (65 aa).

Belongs to the disease resistance NB-LRR family.

It localises to the cytoplasm. It is found in the membrane. In terms of biological role, confers resistance to late blight (Phytophthora infestans) races carrying the avirulence gene Avr1. Resistance proteins guard the plant against pathogens that contain an appropriate avirulence protein via an indirect interaction with this avirulence protein. That triggers a defense system including the hypersensitive response, which restricts the pathogen growth. The chain is Putative late blight resistance protein homolog R1B-12 (R1B-12) from Solanum demissum (Wild potato).